The chain runs to 119 residues: Large ribosomal subunit protein bL20 (119 aa).

Belongs to the bacterial ribosomal protein bL20 family.

Its function is as follows. Binds directly to 23S ribosomal RNA and is necessary for the in vitro assembly process of the 50S ribosomal subunit. It is not involved in the protein synthesizing functions of that subunit. This Thermoanaerobacter sp. (strain X514) protein is Large ribosomal subunit protein bL20.